Consider the following 86-residue polypeptide: HssA/B-like protein 60 (86 aa).

The interval 11–33 (GNIKSSSKSNIASSSSSSSSQSL) is disordered.

Belongs to the hssA/B family.

The polypeptide is HssA/B-like protein 60 (hssl60) (Dictyostelium discoideum (Social amoeba)).